We begin with the raw amino-acid sequence, 167 residues long: Small ribosomal subunit protein uS5 (167 aa).

An S5 DRBM domain is found at 11–74; that stretch reads LQEKLIAVNR…DKARRNMTTI (64 aa).

The protein belongs to the universal ribosomal protein uS5 family. Part of the 30S ribosomal subunit. Contacts proteins S4 and S8.

With S4 and S12 plays an important role in translational accuracy. In terms of biological role, located at the back of the 30S subunit body where it stabilizes the conformation of the head with respect to the body. The protein is Small ribosomal subunit protein uS5 of Baumannia cicadellinicola subsp. Homalodisca coagulata.